The sequence spans 227 residues: ATP-dependent dethiobiotin synthetase BioD (227 aa).

13 to 18 (DIGKTY) is an ATP binding site. Thr-17 lines the Mg(2+) pocket. The active site involves Lys-38. Ser-42 provides a ligand contact to substrate. ATP contacts are provided by residues Asp-55, 116 to 119 (EGSG), and 179 to 180 (NN). Residues Asp-55 and Glu-116 each coordinate Mg(2+).

Belongs to the dethiobiotin synthetase family. As to quaternary structure, homodimer. The cofactor is Mg(2+).

The protein localises to the cytoplasm. It carries out the reaction (7R,8S)-7,8-diammoniononanoate + CO2 + ATP = (4R,5S)-dethiobiotin + ADP + phosphate + 3 H(+). It functions in the pathway cofactor biosynthesis; biotin biosynthesis; biotin from 7,8-diaminononanoate: step 1/2. In terms of biological role, catalyzes a mechanistically unusual reaction, the ATP-dependent insertion of CO2 between the N7 and N8 nitrogen atoms of 7,8-diaminopelargonic acid (DAPA, also called 7,8-diammoniononanoate) to form a ureido ring. This is ATP-dependent dethiobiotin synthetase BioD from Clostridium botulinum (strain Eklund 17B / Type B).